The sequence spans 68 residues: Negative regulator of P-body association (68 aa).

A disordered region spans residues 1–68 (MGDQPCASGR…LKSHPPPPEK (68 aa)).

Interacts with mRNA decapping proteins DCP1A, DCP2 and EDC4.

Its subcellular location is the cytoplasm. It is found in the P-body. Its function is as follows. Promotes dispersal of P-body components and is likely to play a role in the mRNA decapping process. The polypeptide is Negative regulator of P-body association (Homo sapiens (Human)).